Reading from the N-terminus, the 437-residue chain is Enolase (437 aa).

Gln-163 is a (2R)-2-phosphoglycerate binding site. Glu-205 functions as the Proton donor in the catalytic mechanism. Mg(2+) is bound by residues Asp-242, Glu-285, and Asp-312. (2R)-2-phosphoglycerate contacts are provided by Lys-337, Arg-366, Ser-367, and Lys-388. The active-site Proton acceptor is Lys-337.

This sequence belongs to the enolase family. It depends on Mg(2+) as a cofactor.

It localises to the cytoplasm. Its subcellular location is the secreted. The protein localises to the cell surface. It catalyses the reaction (2R)-2-phosphoglycerate = phosphoenolpyruvate + H2O. Its pathway is carbohydrate degradation; glycolysis; pyruvate from D-glyceraldehyde 3-phosphate: step 4/5. In terms of biological role, catalyzes the reversible conversion of 2-phosphoglycerate (2-PG) into phosphoenolpyruvate (PEP). It is essential for the degradation of carbohydrates via glycolysis. The protein is Enolase of Nitratidesulfovibrio vulgaris (strain DP4) (Desulfovibrio vulgaris).